We begin with the raw amino-acid sequence, 169 residues long: MSVLQVLHIPDERLRKVAKPVEEVNAEIQRIVDDMFETMYAEEGIGLAATQVDIHQRIIVIDVSENRNERLVLINPELLEKSGETGIEEGCLSIPEQRALVPRAEKVKIRALDRDGNPFELEADGLLAICIQHEMDHLVGKLFIDYLSPLKQQRIRQKVEKLDRLNARA.

Fe cation-binding residues include cysteine 91 and histidine 133. Glutamate 134 is a catalytic residue. Residue histidine 137 participates in Fe cation binding.

This sequence belongs to the polypeptide deformylase family. Requires Fe(2+) as cofactor.

It carries out the reaction N-terminal N-formyl-L-methionyl-[peptide] + H2O = N-terminal L-methionyl-[peptide] + formate. Functionally, removes the formyl group from the N-terminal Met of newly synthesized proteins. Requires at least a dipeptide for an efficient rate of reaction. N-terminal L-methionine is a prerequisite for activity but the enzyme has broad specificity at other positions. The protein is Peptide deformylase of Salmonella arizonae (strain ATCC BAA-731 / CDC346-86 / RSK2980).